A 103-amino-acid chain; its full sequence is A-type ATP synthase subunit F (103 aa).

It belongs to the V-ATPase F subunit family. Has multiple subunits with at least A(3), B(3), C, D, E, F, H, I and proteolipid K(x).

Its subcellular location is the cell membrane. Functionally, component of the A-type ATP synthase that produces ATP from ADP in the presence of a proton gradient across the membrane. In Pyrococcus furiosus (strain ATCC 43587 / DSM 3638 / JCM 8422 / Vc1), this protein is A-type ATP synthase subunit F.